The primary structure comprises 102 residues: NADH-quinone oxidoreductase subunit K (102 aa).

3 helical membrane passes run 5–25, 31–51, and 66–86; these read IMHYLIVSALMFTIGIAGIFL, IIILMSIELILLSVNLNFVAF, and FILTVAAAEAAIGLAILVVFF.

This sequence belongs to the complex I subunit 4L family. In terms of assembly, NDH-1 is composed of 14 different subunits. Subunits NuoA, H, J, K, L, M, N constitute the membrane sector of the complex.

It localises to the cell inner membrane. It catalyses the reaction a quinone + NADH + 5 H(+)(in) = a quinol + NAD(+) + 4 H(+)(out). In terms of biological role, NDH-1 shuttles electrons from NADH, via FMN and iron-sulfur (Fe-S) centers, to quinones in the respiratory chain. The immediate electron acceptor for the enzyme in this species is believed to be ubiquinone. Couples the redox reaction to proton translocation (for every two electrons transferred, four hydrogen ions are translocated across the cytoplasmic membrane), and thus conserves the redox energy in a proton gradient. The polypeptide is NADH-quinone oxidoreductase subunit K (Bartonella henselae (strain ATCC 49882 / DSM 28221 / CCUG 30454 / Houston 1) (Rochalimaea henselae)).